The sequence spans 426 residues: Immunoglobulin mu Fc receptor (426 aa).

The N-terminal stretch at 1–16 (MNLWLWLLYFLPVSGT) is a signal peptide. Residues 24 to 121 (RLEVELGGSV…GKTQKVTLNV (98 aa)) enclose the Ig-like domain. Disulfide bonds link cysteine 37–cysteine 103 and cysteine 49–cysteine 58. The residue at position 91 (threonine 91) is a Phosphothreonine. A disordered region spans residues 178–212 (KTEAPPVHQPSTNTSVSRHPRVYGASSETPTKPSA). A helical membrane pass occupies residues 267-287 (FHILIPTFLGFLLLVLLGLVV). Disordered regions lie at residues 306–346 (RRMR…REPD) and 401–426 (DSNDYINIPGLPHLPSKPPGPRPSRQ). Residues 415–426 (PSKPPGPRPSRQ) are compositionally biased toward pro residues.

Interacts (via Ig-like domain) with IGHM (via CH4/Cmu4 domain), both secreted and membrane-bound IgM; the interaction is glycan-independent and multivalent theoretically involving up to eight binding sites for the IgM pentamer. Post-translationally, phosphorylated on both Tyr and Ser residues. In terms of processing, O-glycosylated. Sialylated. O-linked glycans regulate trafficking to the plasma membrane.

Its subcellular location is the cell membrane. The protein localises to the early endosome membrane. It is found in the golgi apparatus. It localises to the trans-Golgi network membrane. The protein resides in the lysosome membrane. In terms of biological role, high-affinity Fc receptor for immunoglobulin M (IgM), both secreted and membrane-bound IgM. Primarily regulates IgM transport and homeostasis. In lymphoid cells, enables exocytosis of membrane-bound IgM on the plasma membrane as well as endocytosis of IgM-antigen complexes toward lysosomes for degradation. In mucosal epithelium, mediates retrotranscytosis of antigen-IgM complexes across mucosal M cells toward antigen-presenting cells in mucosal lymphoid tissues. Triggers costimulatory signaling and mediates most of IgM effector functions involved in B cell development and primary immune response to infection. Likely limits tonic IgM BCR signaling to self-antigens for proper negative selection of autoreactive B cells in the bone marrow and for the maintenance of regulatory B cell pool in peripheral lymphoid organs. Mediates antibody responses to T cell-dependent and T cell-independent antigens and promotes induction of an efficient neutralizing IgG response. Engages in cross-talk with antigen-receptor signaling via the non-canonical NF-kappa-B, MAP kinases and calcium signaling pathways. In Rattus norvegicus (Rat), this protein is Immunoglobulin mu Fc receptor.